A 295-amino-acid polypeptide reads, in one-letter code: Phosphatidylserine decarboxylase proenzyme (295 aa).

Catalysis depends on charge relay system; for autoendoproteolytic cleavage activity residues D113, H169, and S256. Catalysis depends on S256, which acts as the Schiff-base intermediate with substrate; via pyruvic acid; for decarboxylase activity. S256 bears the Pyruvic acid (Ser); by autocatalysis mark.

It belongs to the phosphatidylserine decarboxylase family. PSD-B subfamily. Prokaryotic type II sub-subfamily. In terms of assembly, heterodimer of a large membrane-associated beta subunit and a small pyruvoyl-containing alpha subunit. Pyruvate serves as cofactor. Is synthesized initially as an inactive proenzyme. Formation of the active enzyme involves a self-maturation process in which the active site pyruvoyl group is generated from an internal serine residue via an autocatalytic post-translational modification. Two non-identical subunits are generated from the proenzyme in this reaction, and the pyruvate is formed at the N-terminus of the alpha chain, which is derived from the carboxyl end of the proenzyme. The autoendoproteolytic cleavage occurs by a canonical serine protease mechanism, in which the side chain hydroxyl group of the serine supplies its oxygen atom to form the C-terminus of the beta chain, while the remainder of the serine residue undergoes an oxidative deamination to produce ammonia and the pyruvoyl prosthetic group on the alpha chain. During this reaction, the Ser that is part of the protease active site of the proenzyme becomes the pyruvoyl prosthetic group, which constitutes an essential element of the active site of the mature decarboxylase.

The protein localises to the cell membrane. It carries out the reaction a 1,2-diacyl-sn-glycero-3-phospho-L-serine + H(+) = a 1,2-diacyl-sn-glycero-3-phosphoethanolamine + CO2. Its pathway is phospholipid metabolism; phosphatidylethanolamine biosynthesis; phosphatidylethanolamine from CDP-diacylglycerol: step 2/2. Catalyzes the formation of phosphatidylethanolamine (PtdEtn) from phosphatidylserine (PtdSer). This is Phosphatidylserine decarboxylase proenzyme from Clostridium novyi (strain NT).